We begin with the raw amino-acid sequence, 385 residues long: 28S rRNA (uridine-N(3))-methyltransferase (385 aa).

2 disordered regions span residues Met1–Trp35 and Gln47–Arg72. 2 stretches are compositionally biased toward basic and acidic residues: residues His15–Trp35 and Gln47–Glu58. S-adenosyl-L-methionine is bound by residues Arg293, Gly313, Asn342, and Thr343.

Belongs to the class IV-like SAM-binding methyltransferase superfamily. Interacts with INCA1.

The protein localises to the cytoplasm. It is found in the cytoskeleton. Its subcellular location is the spindle. It localises to the chromosome. The protein resides in the centromere. The protein localises to the kinetochore. It is found in the microtubule organizing center. Its subcellular location is the centrosome. It carries out the reaction uridine in 28S rRNA + S-adenosyl-L-methionine = N(3)-methyluridine in 28S rRNA + S-adenosyl-L-homocysteine + H(+). In terms of biological role, S-adenosyl-L-methionine-dependent methyltransferase that specifically methylates the N3 position of a uridine in 28S rRNA. Required for association of the centrosomes with the poles of the bipolar mitotic spindle during metaphase. Also involved in chromosome alignment. May promote centrosome maturation probably by recruiting A-kinase anchor protein AKAP9 to centrosomes in early mitosis. Binds specifically to miRNA MIR145 hairpin, regulates MIR145 expression at a postranscriptional level. The sequence is that of 28S rRNA (uridine-N(3))-methyltransferase from Mus musculus (Mouse).